The following is a 65-amino-acid chain: DNA gyrase inhibitor YacG (65 aa).

Zn(2+) contacts are provided by C9, C12, C28, and C32. The segment at 44 to 65 (EKRIPSSSDLSESDDWSEEPKQ) is disordered. A compositionally biased stretch (acidic residues) spans 54–65 (SESDDWSEEPKQ).

It belongs to the DNA gyrase inhibitor YacG family. Interacts with GyrB. The cofactor is Zn(2+).

Inhibits all the catalytic activities of DNA gyrase by preventing its interaction with DNA. Acts by binding directly to the C-terminal domain of GyrB, which probably disrupts DNA binding by the gyrase. In Escherichia coli O6:H1 (strain CFT073 / ATCC 700928 / UPEC), this protein is DNA gyrase inhibitor YacG.